Here is a 95-residue protein sequence, read N- to C-terminus: Ferredoxin-like protein FixX (95 aa).

This sequence belongs to the bacterial-type ferredoxin family. FixX subfamily.

In terms of biological role, could be part of an electron transfer system required for anaerobic carnitine reduction. Could be a 3Fe-4S cluster-containing protein. This is Ferredoxin-like protein FixX (fixX) from Escherichia coli O157:H7.